The sequence spans 228 residues: Ribose-5-phosphate isomerase A (228 aa).

Residues 27–30 (TGTT), 86–89 (DGAD), and 100–103 (KGMG) each bind substrate. E109 (proton acceptor) is an active-site residue. K127 is a binding site for substrate.

The protein belongs to the ribose 5-phosphate isomerase family. In terms of assembly, homodimer.

It carries out the reaction aldehydo-D-ribose 5-phosphate = D-ribulose 5-phosphate. Its pathway is carbohydrate degradation; pentose phosphate pathway; D-ribose 5-phosphate from D-ribulose 5-phosphate (non-oxidative stage): step 1/1. Catalyzes the reversible conversion of ribose-5-phosphate to ribulose 5-phosphate. The protein is Ribose-5-phosphate isomerase A of Borreliella burgdorferi (strain ZS7) (Borrelia burgdorferi).